The following is a 149-amino-acid chain: D-aminoacyl-tRNA deacylase (149 aa).

A Gly-cisPro motif, important for rejection of L-amino acids motif is present at residues 137 to 138 (GP).

Belongs to the DTD family. Homodimer.

Its subcellular location is the cytoplasm. The enzyme catalyses glycyl-tRNA(Ala) + H2O = tRNA(Ala) + glycine + H(+). The catalysed reaction is a D-aminoacyl-tRNA + H2O = a tRNA + a D-alpha-amino acid + H(+). Its function is as follows. An aminoacyl-tRNA editing enzyme that deacylates mischarged D-aminoacyl-tRNAs. Also deacylates mischarged glycyl-tRNA(Ala), protecting cells against glycine mischarging by AlaRS. Acts via tRNA-based rather than protein-based catalysis; rejects L-amino acids rather than detecting D-amino acids in the active site. By recycling D-aminoacyl-tRNA to D-amino acids and free tRNA molecules, this enzyme counteracts the toxicity associated with the formation of D-aminoacyl-tRNA entities in vivo and helps enforce protein L-homochirality. This chain is D-aminoacyl-tRNA deacylase, found in Fervidobacterium nodosum (strain ATCC 35602 / DSM 5306 / Rt17-B1).